Here is a 390-residue protein sequence, read N- to C-terminus: Phosphopentomutase (390 aa).

Residues Asp14, Asp286, His291, Asp327, His328, and His339 each coordinate Mn(2+).

This sequence belongs to the phosphopentomutase family. It depends on Mn(2+) as a cofactor.

The protein localises to the cytoplasm. The enzyme catalyses 2-deoxy-alpha-D-ribose 1-phosphate = 2-deoxy-D-ribose 5-phosphate. It catalyses the reaction alpha-D-ribose 1-phosphate = D-ribose 5-phosphate. It participates in carbohydrate degradation; 2-deoxy-D-ribose 1-phosphate degradation; D-glyceraldehyde 3-phosphate and acetaldehyde from 2-deoxy-alpha-D-ribose 1-phosphate: step 1/2. Functionally, isomerase that catalyzes the conversion of deoxy-ribose 1-phosphate (dRib-1-P) and ribose 1-phosphate (Rib-1-P) to deoxy-ribose 5-phosphate (dRib-5-P) and ribose 5-phosphate (Rib-5-P), respectively. The protein is Phosphopentomutase of Exiguobacterium sibiricum (strain DSM 17290 / CCUG 55495 / CIP 109462 / JCM 13490 / 255-15).